Here is a 538-residue protein sequence, read N- to C-terminus: Chaperonin GroEL (538 aa).

ATP contacts are provided by residues 29–32, 86–90, glycine 413, 476–478, and aspartate 492; these read TIGP, DGTTT, and NAA.

It belongs to the chaperonin (HSP60) family. As to quaternary structure, forms a cylinder of 14 subunits composed of two heptameric rings stacked back-to-back. Interacts with the co-chaperonin GroES.

The protein resides in the cytoplasm. It catalyses the reaction ATP + H2O + a folded polypeptide = ADP + phosphate + an unfolded polypeptide.. Together with its co-chaperonin GroES, plays an essential role in assisting protein folding. The GroEL-GroES system forms a nano-cage that allows encapsulation of the non-native substrate proteins and provides a physical environment optimized to promote and accelerate protein folding. The polypeptide is Chaperonin GroEL (Staphylococcus aureus (strain Mu3 / ATCC 700698)).